The following is a 953-amino-acid chain: Glycine dehydrogenase (decarboxylating) (953 aa).

The residue at position 705 (lysine 705) is an N6-(pyridoxal phosphate)lysine.

This sequence belongs to the GcvP family. The glycine cleavage system is composed of four proteins: P, T, L and H. Pyridoxal 5'-phosphate is required as a cofactor.

The enzyme catalyses N(6)-[(R)-lipoyl]-L-lysyl-[glycine-cleavage complex H protein] + glycine + H(+) = N(6)-[(R)-S(8)-aminomethyldihydrolipoyl]-L-lysyl-[glycine-cleavage complex H protein] + CO2. The glycine cleavage system catalyzes the degradation of glycine. The P protein binds the alpha-amino group of glycine through its pyridoxal phosphate cofactor; CO(2) is released and the remaining methylamine moiety is then transferred to the lipoamide cofactor of the H protein. The chain is Glycine dehydrogenase (decarboxylating) from Sodalis glossinidius (strain morsitans).